Reading from the N-terminus, the 829-residue chain is Protein roadkill (829 aa).

Composition is skewed to low complexity over residues E24–Q36, T122–P140, and S266–S288. 4 disordered regions span residues E24–N47, S106–V142, S266–S296, and H313–Q400. Basic residues predominate over residues H313 to P322. Low complexity-rich tracts occupy residues L323–H353, S372–S382, and S389–Q400. In terms of domain architecture, MATH spans K486–V616. Positions S655–E722 constitute a BTB domain.

It belongs to the Tdpoz family. Interacts with ci and gft/CUL3. In terms of tissue distribution, expressed near the anterio-posterior compartment boundary of antenna, leg and wing disks.

The protein resides in the nucleus. The protein operates within protein modification; protein ubiquitination. Functionally, involved in segment polarity. In complex with gft/CUL3, promotes ubiquitination of ci and its subsequent degradation by the proteasome, which results in hh signaling attenuation. This regulation may be important during eye formation for proper packing of ommatidia into a hexagonal array. The chain is Protein roadkill (rdx) from Drosophila melanogaster (Fruit fly).